Consider the following 307-residue polypeptide: G-protein coupled receptor 35 (307 aa).

The Extracellular segment spans residues 1-18; the sequence is MNSTTCNSTLTWPASVNN. Residues asparagine 2 and asparagine 7 are each glycosylated (N-linked (GlcNAc...) asparagine). The chain crosses the membrane as a helical span at residues 19 to 39; sequence FFIIYSALLLVLGLLLNSVAL. Residues 40–53 lie on the Cytoplasmic side of the membrane; that stretch reads WVFCYRMHQWTETR. A helical membrane pass occupies residues 54–74; sequence IYMTNLAVADLCLLCSLPFVL. Residues 75-88 are Extracellular-facing; the sequence is YSLKYSSSDTPVCQ. A disulfide bridge links cysteine 87 with cysteine 160. The chain crosses the membrane as a helical span at residues 89–110; sequence LSQGIYLANRYMSISLVTAIAV. Topologically, residues 111–129 are cytoplasmic; it reads DRYVAVRHPLRARELRSPR. The chain crosses the membrane as a helical span at residues 130–150; sequence QAAAVCVALWVIVVTSLVVRW. Residues 151–176 are Extracellular-facing; the sequence is RLGMQEGGFCFSSQTRRNFSTTAFSL. Residues 177-197 traverse the membrane as a helical segment; sequence LGFYLPLAIVVFCSLQVVTVL. Over 198 to 217 the chain is Cytoplasmic; that stretch reads SRRPAADVGQAEATQKATHM. A helical membrane pass occupies residues 218 to 238; it reads VWANLAVFVICFLPLHVVLTV. The Extracellular portion of the chain corresponds to 239–257; the sequence is QVSLNLNTCAARDTFSRAL. Residues 258 to 278 form a helical membrane-spanning segment; the sequence is SITGKLSDTNCCLDAICYYYM. Residues 279 to 307 are Cytoplasmic-facing; the sequence is AREFQEASKPATSSNTPHKSQDSQILSLT. Residues serine 286, serine 292, serine 298, and serine 301 each carry the phosphoserine modification. The disordered stretch occupies residues 288 to 307; sequence PATSSNTPHKSQDSQILSLT.

The protein belongs to the G-protein coupled receptor 1 family. Post-translationally, multiply phosphorylated in clusters of serines and threonines in the C-terminal tail. Phosphorylation of Ser-298 and Ser-301 is mediated by GRK5 and/or GRK6. As to expression, predominantly expressed in immune and gastrointestinal tissues. Strongly GPR35 expressed in colonic macrophages.

The protein resides in the cell membrane. Functionally, G-protein coupled receptor that binds to several ligands including the tryptophan metabolite kynurenic acid (KYNA), lysophosphatidic acid (LPA) or 5-hydroxyindoleacetic acid (5-HIAA) with high affinity, leading to rapid and transient activation of numerous intracellular signaling pathways. Plays a role in neutrophil recruitment to sites of inflammation and bacterial clearance through the major serotonin metabolite 5-HIAA that acts as a physiological ligand. Stimulates lipid metabolism, thermogenic, and anti-inflammatory gene expression in adipose tissue once activated by kynurenic acid. In macrophages, activation by lysophosphatidic acid promotes GPR35-induced signaling with a distinct transcriptional profile characterized by TNF production associated with ERK and NF-kappa-B activation. In turn, induces chemotaxis of macrophages. This chain is G-protein coupled receptor 35 (Gpr35), found in Mus musculus (Mouse).